Reading from the N-terminus, the 574-residue chain is Glutamate--tRNA ligase (574 aa).

A 'HIGH' region motif is present at residues 109 to 119 (PNPDFVIHMGN).

It belongs to the class-I aminoacyl-tRNA synthetase family. Glutamate--tRNA ligase type 2 subfamily.

It localises to the cytoplasm. The catalysed reaction is tRNA(Glu) + L-glutamate + ATP = L-glutamyl-tRNA(Glu) + AMP + diphosphate. Functionally, catalyzes the attachment of glutamate to tRNA(Glu) in a two-step reaction: glutamate is first activated by ATP to form Glu-AMP and then transferred to the acceptor end of tRNA(Glu). The sequence is that of Glutamate--tRNA ligase from Aeropyrum pernix (strain ATCC 700893 / DSM 11879 / JCM 9820 / NBRC 100138 / K1).